The following is a 53-amino-acid chain: uncharacterized protein (53 aa).

It belongs to the ELIP/psbS family.

It localises to the plastid. Its subcellular location is the chloroplast. Its function is as follows. Possible role in chlorophyll and/or carotenoid binding. This is an uncharacterized protein from Guillardia theta (Cryptophyte).